Here is a 293-residue protein sequence, read N- to C-terminus: Epimerase family protein SDR39U1 (293 aa).

NADP(+)-binding positions include 31–32, 58–59, Glu-77, Arg-82, and Val-160; these read SR and LA.

The protein belongs to the NAD(P)-dependent epimerase/dehydratase family. SDR39U1 subfamily. In terms of tissue distribution, expressed in adrenal gland.

In terms of biological role, putative NADP-dependent oxidoreductase. In Homo sapiens (Human), this protein is Epimerase family protein SDR39U1 (SDR39U1).